The primary structure comprises 379 residues: Chaperone protein DnaJ (379 aa).

One can recognise a J domain in the interval 5-70; it reads DYYEVLGVSR…QKRAAYDQYG (66 aa). The CR-type zinc finger occupies 134–212; the sequence is GVTKEIRIPT…CHGHGRVEKS (79 aa). Zn(2+)-binding residues include Cys147, Cys150, Cys164, Cys167, Cys186, Cys189, Cys200, and Cys203. 4 CXXCXGXG motif repeats span residues 147–154, 164–171, 186–193, and 200–207; these read CDVCHGSG, CPTCHGAG, CPHCHGRG, and CNKCHGHG.

Belongs to the DnaJ family. In terms of assembly, homodimer. Zn(2+) is required as a cofactor.

It is found in the cytoplasm. Functionally, participates actively in the response to hyperosmotic and heat shock by preventing the aggregation of stress-denatured proteins and by disaggregating proteins, also in an autonomous, DnaK-independent fashion. Unfolded proteins bind initially to DnaJ; upon interaction with the DnaJ-bound protein, DnaK hydrolyzes its bound ATP, resulting in the formation of a stable complex. GrpE releases ADP from DnaK; ATP binding to DnaK triggers the release of the substrate protein, thus completing the reaction cycle. Several rounds of ATP-dependent interactions between DnaJ, DnaK and GrpE are required for fully efficient folding. Also involved, together with DnaK and GrpE, in the DNA replication of plasmids through activation of initiation proteins. This Yersinia pestis bv. Antiqua (strain Antiqua) protein is Chaperone protein DnaJ.